We begin with the raw amino-acid sequence, 394 residues long: Formate-dependent phosphoribosylglycinamide formyltransferase (394 aa).

Residues 22–23 (EL) and glutamate 82 contribute to the N(1)-(5-phospho-beta-D-ribosyl)glycinamide site. ATP contacts are provided by residues arginine 114, lysine 155, 160 to 165 (SSGKGQ), 195 to 198 (EGFV), and glutamate 203. Positions 119 to 308 (RLAAETLKLP…EFALHVRAIL (190 aa)) constitute an ATP-grasp domain. 2 residues coordinate Mg(2+): glutamate 267 and glutamate 279. Residues aspartate 286, lysine 357, and 364–365 (RR) each bind N(1)-(5-phospho-beta-D-ribosyl)glycinamide.

This sequence belongs to the PurK/PurT family. In terms of assembly, homodimer.

The catalysed reaction is N(1)-(5-phospho-beta-D-ribosyl)glycinamide + formate + ATP = N(2)-formyl-N(1)-(5-phospho-beta-D-ribosyl)glycinamide + ADP + phosphate + H(+). Its pathway is purine metabolism; IMP biosynthesis via de novo pathway; N(2)-formyl-N(1)-(5-phospho-D-ribosyl)glycinamide from N(1)-(5-phospho-D-ribosyl)glycinamide (formate route): step 1/1. Involved in the de novo purine biosynthesis. Catalyzes the transfer of formate to 5-phospho-ribosyl-glycinamide (GAR), producing 5-phospho-ribosyl-N-formylglycinamide (FGAR). Formate is provided by PurU via hydrolysis of 10-formyl-tetrahydrofolate. The protein is Formate-dependent phosphoribosylglycinamide formyltransferase of Tolumonas auensis (strain DSM 9187 / NBRC 110442 / TA 4).